A 185-amino-acid chain; its full sequence is Translation initiation factor IF-3 (185 aa).

The protein belongs to the IF-3 family. As to quaternary structure, monomer.

It is found in the cytoplasm. In terms of biological role, IF-3 binds to the 30S ribosomal subunit and shifts the equilibrium between 70S ribosomes and their 50S and 30S subunits in favor of the free subunits, thus enhancing the availability of 30S subunits on which protein synthesis initiation begins. This Bacteroides thetaiotaomicron (strain ATCC 29148 / DSM 2079 / JCM 5827 / CCUG 10774 / NCTC 10582 / VPI-5482 / E50) protein is Translation initiation factor IF-3.